A 368-amino-acid polypeptide reads, in one-letter code: UDP-N-acetylglucosamine--N-acetylmuramyl-(pentapeptide) pyrophosphoryl-undecaprenol N-acetylglucosamine transferase (368 aa).

UDP-N-acetyl-alpha-D-glucosamine is bound by residues 13–15, N124, R167, S195, and Q296; that span reads TGG.

Belongs to the glycosyltransferase 28 family. MurG subfamily.

Its subcellular location is the cell inner membrane. The enzyme catalyses di-trans,octa-cis-undecaprenyl diphospho-N-acetyl-alpha-D-muramoyl-L-alanyl-D-glutamyl-meso-2,6-diaminopimeloyl-D-alanyl-D-alanine + UDP-N-acetyl-alpha-D-glucosamine = di-trans,octa-cis-undecaprenyl diphospho-[N-acetyl-alpha-D-glucosaminyl-(1-&gt;4)]-N-acetyl-alpha-D-muramoyl-L-alanyl-D-glutamyl-meso-2,6-diaminopimeloyl-D-alanyl-D-alanine + UDP + H(+). It participates in cell wall biogenesis; peptidoglycan biosynthesis. Cell wall formation. Catalyzes the transfer of a GlcNAc subunit on undecaprenyl-pyrophosphoryl-MurNAc-pentapeptide (lipid intermediate I) to form undecaprenyl-pyrophosphoryl-MurNAc-(pentapeptide)GlcNAc (lipid intermediate II). The sequence is that of UDP-N-acetylglucosamine--N-acetylmuramyl-(pentapeptide) pyrophosphoryl-undecaprenol N-acetylglucosamine transferase from Maricaulis maris (strain MCS10) (Caulobacter maris).